Reading from the N-terminus, the 387-residue chain is tRNA pseudouridine synthase B (387 aa).

Asp-43 serves as the catalytic Nucleophile.

Belongs to the pseudouridine synthase TruB family. Type 1 subfamily.

It catalyses the reaction uridine(55) in tRNA = pseudouridine(55) in tRNA. In terms of biological role, responsible for synthesis of pseudouridine from uracil-55 in the psi GC loop of transfer RNAs. The chain is tRNA pseudouridine synthase B from Bifidobacterium longum (strain NCC 2705).